A 264-amino-acid polypeptide reads, in one-letter code: ATP synthase subunit a (264 aa).

Helical transmembrane passes span 39–59, 97–117, 139–159, 205–225, and 239–259; these read LDTL…FYIV, VAPL…MDLV, TADP…VIFY, LFGN…LPWW, and LLVI…YISL.

Belongs to the ATPase A chain family. F-type ATPases have 2 components, CF(1) - the catalytic core - and CF(0) - the membrane proton channel. CF(1) has five subunits: alpha(3), beta(3), gamma(1), delta(1), epsilon(1). CF(0) has three main subunits: a(1), b(2) and c(9-12). The alpha and beta chains form an alternating ring which encloses part of the gamma chain. CF(1) is attached to CF(0) by a central stalk formed by the gamma and epsilon chains, while a peripheral stalk is formed by the delta and b chains.

The protein resides in the cell inner membrane. In terms of biological role, key component of the proton channel; it plays a direct role in the translocation of protons across the membrane. The chain is ATP synthase subunit a from Coxiella burnetii (strain Dugway 5J108-111).